The sequence spans 232 residues: dITP/XTP pyrophosphatase (232 aa).

Substrate is bound at residue 10 to 15 (TRNKGK). Aspartate 72 (proton acceptor) is an active-site residue. Aspartate 72 contacts Mg(2+). Substrate-binding positions include serine 73, 153 to 156 (FGYD), lysine 176, and 181 to 182 (HR).

The protein belongs to the HAM1 NTPase family. Homodimer. Mg(2+) is required as a cofactor.

The catalysed reaction is XTP + H2O = XMP + diphosphate + H(+). It catalyses the reaction dITP + H2O = dIMP + diphosphate + H(+). It carries out the reaction ITP + H2O = IMP + diphosphate + H(+). Pyrophosphatase that catalyzes the hydrolysis of nucleoside triphosphates to their monophosphate derivatives, with a high preference for the non-canonical purine nucleotides XTP (xanthosine triphosphate), dITP (deoxyinosine triphosphate) and ITP. Seems to function as a house-cleaning enzyme that removes non-canonical purine nucleotides from the nucleotide pool, thus preventing their incorporation into DNA/RNA and avoiding chromosomal lesions. In Syntrophobacter fumaroxidans (strain DSM 10017 / MPOB), this protein is dITP/XTP pyrophosphatase.